The chain runs to 758 residues: 5-methyltetrahydropteroyltriglutamate--homocysteine methyltransferase (758 aa).

5-methyltetrahydropteroyltri-L-glutamate contacts are provided by residues 17 to 20 (RELK) and lysine 117. L-homocysteine is bound by residues 434-436 (IGS) and glutamate 487. Residues 434–436 (IGS) and glutamate 487 contribute to the L-methionine site. 5-methyltetrahydropteroyltri-L-glutamate is bound by residues 518-519 (RC) and tryptophan 564. Aspartate 602 serves as a coordination point for L-homocysteine. Aspartate 602 serves as a coordination point for L-methionine. Residue glutamate 608 coordinates 5-methyltetrahydropteroyltri-L-glutamate. The Zn(2+) site is built by histidine 644, cysteine 646, and glutamate 668. Histidine 697 functions as the Proton donor in the catalytic mechanism. Residue cysteine 729 participates in Zn(2+) binding.

This sequence belongs to the vitamin-B12 independent methionine synthase family. Zn(2+) serves as cofactor.

It catalyses the reaction 5-methyltetrahydropteroyltri-L-glutamate + L-homocysteine = tetrahydropteroyltri-L-glutamate + L-methionine. It participates in amino-acid biosynthesis; L-methionine biosynthesis via de novo pathway; L-methionine from L-homocysteine (MetE route): step 1/1. Its function is as follows. Catalyzes the transfer of a methyl group from 5-methyltetrahydrofolate to homocysteine resulting in methionine formation. The chain is 5-methyltetrahydropteroyltriglutamate--homocysteine methyltransferase from Yersinia enterocolitica serotype O:8 / biotype 1B (strain NCTC 13174 / 8081).